The primary structure comprises 161 residues: Ubiquitin-conjugating enzyme E2Q-like protein 1 (161 aa).

Residues 1-154 (MKELQDIARL…VKTHEKYGWV (154 aa)) enclose the UBC core domain. The active-site Glycyl thioester intermediate is the Cys88.

This sequence belongs to the ubiquitin-conjugating enzyme family. As to quaternary structure, interacts with FBXW7.

The protein resides in the nucleus. It carries out the reaction S-ubiquitinyl-[E1 ubiquitin-activating enzyme]-L-cysteine + [E2 ubiquitin-conjugating enzyme]-L-cysteine = [E1 ubiquitin-activating enzyme]-L-cysteine + S-ubiquitinyl-[E2 ubiquitin-conjugating enzyme]-L-cysteine.. Its pathway is protein modification; protein ubiquitination. Probable E2 ubiquitin-protein ligase that catalyzes the covalent attachment of ubiquitin to target proteins. May facilitate the monoubiquitination and degradation of MTOR and CCNE1 through interaction with FBXW7. This is Ubiquitin-conjugating enzyme E2Q-like protein 1 (UBE2QL1) from Homo sapiens (Human).